Consider the following 430-residue polypeptide: Adenylosuccinate synthetase (430 aa).

GTP is bound by residues 12–18 (GDEGKGK) and 40–42 (GHT). D13 functions as the Proton acceptor in the catalytic mechanism. Positions 13 and 40 each coordinate Mg(2+). Residues 13–16 (DEGK), 38–41 (NAGH), T128, R142, Q223, T238, and R302 contribute to the IMP site. The Proton donor role is filled by H41. 298-304 (TTTGRPR) provides a ligand contact to substrate. Residues R304, 330 to 332 (SID), and 412 to 414 (SVG) contribute to the GTP site.

The protein belongs to the adenylosuccinate synthetase family. In terms of assembly, homodimer. It depends on Mg(2+) as a cofactor.

The protein localises to the cytoplasm. The enzyme catalyses IMP + L-aspartate + GTP = N(6)-(1,2-dicarboxyethyl)-AMP + GDP + phosphate + 2 H(+). The protein operates within purine metabolism; AMP biosynthesis via de novo pathway; AMP from IMP: step 1/2. Functionally, plays an important role in the de novo pathway of purine nucleotide biosynthesis. Catalyzes the first committed step in the biosynthesis of AMP from IMP. The chain is Adenylosuccinate synthetase from Streptococcus pyogenes serotype M49 (strain NZ131).